The chain runs to 184 residues: ATP-dependent protease subunit HslV (184 aa).

The active site involves Thr2. Residues Gly157, Cys160, and Thr163 each coordinate Na(+).

It belongs to the peptidase T1B family. HslV subfamily. In terms of assembly, a double ring-shaped homohexamer of HslV is capped on each side by a ring-shaped HslU homohexamer. The assembly of the HslU/HslV complex is dependent on binding of ATP.

Its subcellular location is the cytoplasm. It catalyses the reaction ATP-dependent cleavage of peptide bonds with broad specificity.. Its activity is regulated as follows. Allosterically activated by HslU binding. In terms of biological role, protease subunit of a proteasome-like degradation complex believed to be a general protein degrading machinery. The protein is ATP-dependent protease subunit HslV of Vibrio vulnificus (strain CMCP6).